A 301-amino-acid chain; its full sequence is GTPase Era (301 aa).

Residues 7-175 (YCGFIAIVGR…AAIVRKHLPE (169 aa)) form the Era-type G domain. Residues 15 to 22 (GRPNVGKS) form a G1 region. 15–22 (GRPNVGKS) is a binding site for GTP. The G2 stretch occupies residues 41-45 (QTTRH). Residues 62–65 (DTPG) form a G3 region. Residues 62–66 (DTPGL) and 124–127 (NKVD) each bind GTP. The interval 124–127 (NKVD) is G4. The G5 stretch occupies residues 154-156 (ISA). In terms of domain architecture, KH type-2 spans 206–283 (LGAELPYSVT…HLELWVKVKS (78 aa)).

Belongs to the TRAFAC class TrmE-Era-EngA-EngB-Septin-like GTPase superfamily. Era GTPase family. In terms of assembly, monomer.

It is found in the cytoplasm. The protein localises to the cell inner membrane. Its function is as follows. An essential GTPase that binds both GDP and GTP, with rapid nucleotide exchange. Plays a role in 16S rRNA processing and 30S ribosomal subunit biogenesis and possibly also in cell cycle regulation and energy metabolism. The chain is GTPase Era from Cronobacter sakazakii (strain ATCC BAA-894) (Enterobacter sakazakii).